The sequence spans 153 residues: Glucose-6-phosphate 1-dehydrogenase (153 aa).

Residues R21 and K120 each coordinate NADP(+). K120 contacts D-glucose 6-phosphate.

Belongs to the glucose-6-phosphate dehydrogenase family.

The protein resides in the cytoplasm. It localises to the cytosol. The enzyme catalyses D-glucose 6-phosphate + NADP(+) = 6-phospho-D-glucono-1,5-lactone + NADPH + H(+). It functions in the pathway carbohydrate degradation; pentose phosphate pathway; D-ribulose 5-phosphate from D-glucose 6-phosphate (oxidative stage): step 1/3. Cytosolic glucose-6-phosphate dehydrogenase that catalyzes the first and rate-limiting step of the oxidative branch within the pentose phosphate pathway/shunt, an alternative route to glycolysis for the dissimilation of carbohydrates and a major source of reducing power and metabolic intermediates for fatty acid and nucleic acid biosynthetic processes. The polypeptide is Glucose-6-phosphate 1-dehydrogenase (ZW) (Sarcophaga bullata (Grey flesh fly)).